Here is a 144-residue protein sequence, read N- to C-terminus: Large ribosomal subunit protein uL14 (144 aa).

This sequence belongs to the universal ribosomal protein uL14 family. As to quaternary structure, part of the 50S ribosomal subunit. Forms a cluster with proteins L3 and L24e, part of which may contact the 16S rRNA in 2 intersubunit bridges.

In terms of biological role, binds to 23S rRNA. Forms part of two intersubunit bridges in the 70S ribosome. The protein is Large ribosomal subunit protein uL14 of Pyrobaculum aerophilum (strain ATCC 51768 / DSM 7523 / JCM 9630 / CIP 104966 / NBRC 100827 / IM2).